A 129-amino-acid polypeptide reads, in one-letter code: NADH-quinone oxidoreductase subunit A (129 aa).

The next 3 membrane-spanning stretches (helical) occupy residues 14–34 (LAIH…VAAW), 67–87 (FLIA…FAWA), and 95–115 (WLGL…LVYL).

It belongs to the complex I subunit 3 family. As to quaternary structure, NDH-1 is composed of 14 different subunits. Subunits NuoA, H, J, K, L, M, N constitute the membrane sector of the complex.

The protein resides in the cell inner membrane. The catalysed reaction is a quinone + NADH + 5 H(+)(in) = a quinol + NAD(+) + 4 H(+)(out). In terms of biological role, NDH-1 shuttles electrons from NADH, via FMN and iron-sulfur (Fe-S) centers, to quinones in the respiratory chain. The immediate electron acceptor for the enzyme in this species is believed to be ubiquinone. Couples the redox reaction to proton translocation (for every two electrons transferred, four hydrogen ions are translocated across the cytoplasmic membrane), and thus conserves the redox energy in a proton gradient. The polypeptide is NADH-quinone oxidoreductase subunit A (Rhodopseudomonas palustris (strain BisB5)).